The following is a 335-amino-acid chain: Fructose-1,6-bisphosphatase class 1 (335 aa).

4 residues coordinate Mg(2+): Glu-90, Asp-112, Leu-114, and Asp-115. Residues 115–118 (DGSS), Asn-210, and Lys-276 contribute to the substrate site. Glu-282 provides a ligand contact to Mg(2+).

The protein belongs to the FBPase class 1 family. As to quaternary structure, homotetramer. Mg(2+) serves as cofactor.

Its subcellular location is the cytoplasm. The catalysed reaction is beta-D-fructose 1,6-bisphosphate + H2O = beta-D-fructose 6-phosphate + phosphate. It participates in carbohydrate biosynthesis; gluconeogenesis. The sequence is that of Fructose-1,6-bisphosphatase class 1 from Ectopseudomonas mendocina (strain ymp) (Pseudomonas mendocina).